Here is a 303-residue protein sequence, read N- to C-terminus: Sulfate adenylyltransferase subunit 2 (303 aa).

A disordered region spans residues 282 to 303; that stretch reads SGRLIDHDESGSMEKKKREGYF.

This sequence belongs to the PAPS reductase family. CysD subfamily. Heterodimer composed of CysD, the smaller subunit, and CysN.

The catalysed reaction is sulfate + ATP + H(+) = adenosine 5'-phosphosulfate + diphosphate. It functions in the pathway sulfur metabolism; hydrogen sulfide biosynthesis; sulfite from sulfate: step 1/3. With CysN forms the ATP sulfurylase (ATPS) that catalyzes the adenylation of sulfate producing adenosine 5'-phosphosulfate (APS) and diphosphate, the first enzymatic step in sulfur assimilation pathway. APS synthesis involves the formation of a high-energy phosphoric-sulfuric acid anhydride bond driven by GTP hydrolysis by CysN coupled to ATP hydrolysis by CysD. The protein is Sulfate adenylyltransferase subunit 2 of Maricaulis maris (strain MCS10) (Caulobacter maris).